Here is a 204-residue protein sequence, read N- to C-terminus: Transmembrane protein 253 (204 aa).

A run of 4 helical transmembrane segments spans residues 33 to 53 (LVLA…TISV), 62 to 82 (LVTA…IITL), 96 to 116 (MMIS…IEVM), and 138 to 158 (LSAE…LFLL). Positions 184–204 (EEVSGLENGPVVASTGNRTDE) are disordered.

The protein localises to the membrane. This chain is Transmembrane protein 253 (Tmem253), found in Mus musculus (Mouse).